Reading from the N-terminus, the 342-residue chain is tRNA N6-adenosine threonylcarbamoyltransferase (342 aa).

Positions 111 and 115 each coordinate Fe cation. Residues 134 to 138 (LVSGG), aspartate 167, glycine 180, and asparagine 277 contribute to the substrate site. Position 305 (aspartate 305) interacts with Fe cation.

Belongs to the KAE1 / TsaD family. Fe(2+) serves as cofactor.

It is found in the cytoplasm. The enzyme catalyses L-threonylcarbamoyladenylate + adenosine(37) in tRNA = N(6)-L-threonylcarbamoyladenosine(37) in tRNA + AMP + H(+). Required for the formation of a threonylcarbamoyl group on adenosine at position 37 (t(6)A37) in tRNAs that read codons beginning with adenine. Is involved in the transfer of the threonylcarbamoyl moiety of threonylcarbamoyl-AMP (TC-AMP) to the N6 group of A37, together with TsaE and TsaB. TsaD likely plays a direct catalytic role in this reaction. The protein is tRNA N6-adenosine threonylcarbamoyltransferase of Histophilus somni (strain 2336) (Haemophilus somnus).